Here is a 353-residue protein sequence, read N- to C-terminus: S-adenosylmethionine:tRNA ribosyltransferase-isomerase (353 aa).

The protein belongs to the QueA family. In terms of assembly, monomer.

The protein localises to the cytoplasm. It catalyses the reaction 7-aminomethyl-7-carbaguanosine(34) in tRNA + S-adenosyl-L-methionine = epoxyqueuosine(34) in tRNA + adenine + L-methionine + 2 H(+). It participates in tRNA modification; tRNA-queuosine biosynthesis. Functionally, transfers and isomerizes the ribose moiety from AdoMet to the 7-aminomethyl group of 7-deazaguanine (preQ1-tRNA) to give epoxyqueuosine (oQ-tRNA). The chain is S-adenosylmethionine:tRNA ribosyltransferase-isomerase from Rickettsia bellii (strain RML369-C).